The chain runs to 153 residues: Regulatory protein RecX (153 aa).

The protein belongs to the RecX family.

The protein localises to the cytoplasm. Its function is as follows. Modulates RecA activity. The polypeptide is Regulatory protein RecX (Neisseria meningitidis serogroup C / serotype 2a (strain ATCC 700532 / DSM 15464 / FAM18)).